We begin with the raw amino-acid sequence, 336 residues long: Zinc finger protein GFI1 homolog pag-3 (336 aa).

5 C2H2-type zinc fingers span residues 126 to 148, 154 to 176, 182 to 204, 210 to 232, and 238 to 260; these read FHCQ…QQVH, FECK…LLIH, YPCE…TYIH, HKCT…TRKH, and FACD…RESH. The interval 253–290 is disordered; that stretch reads RRRHRESHHPGHPEECVSASQISSDLSPKGYMTPPTSN.

In terms of assembly, may interact with transcription factor unc-3. Expressed in the BDU neurons, the touch neurons, the VA, VB and VC motor neurons, two AVF interneurons and unidentified neurons of the retrovesicular ganglion (at protein level).

The protein localises to the nucleus. It is found in the cell projection. The protein resides in the axon. Its subcellular location is the perikaryon. In terms of biological role, transcription factor. Plays a role in the determination of neuroblast cell fate and neuronal differentiation. Negatively modulates expression of several components of dense-core vesicles (DCVs), thereby, in a DCV membrane protein ida-1-dependent manner, regulating neurosecretion. Negatively modulates the transcription of its own gene, the mechanosensory gene mec-3, and also other touch neuron-specific genes in the BDU neurons; required for coordinated movement. Required to determine the identity of BDU sensory neurons in concert with transcription factor unc-86, regulating expression of a number of genes, including transcription factors ceh-14 and ahr-1, neuropeptides flp-10, nlp-1 and nlp-15, and tyramine receptor-encoding ser-2. Acts in concert with non-canonical WNT signaling to negatively modulate transcription of mec-3 gene in BDU neurons. May act in concert with transcription factor unc-3 in motor neuron fate determination. May play a role programmed cell death. This Caenorhabditis elegans protein is Zinc finger protein GFI1 homolog pag-3.